A 298-amino-acid chain; its full sequence is ATP phosphoribosyltransferase (298 aa).

It belongs to the ATP phosphoribosyltransferase family.

Its subcellular location is the cytoplasm. The enzyme catalyses 1-(5-phospho-beta-D-ribosyl)-ATP + diphosphate = 5-phospho-alpha-D-ribose 1-diphosphate + ATP. It functions in the pathway amino-acid biosynthesis; L-histidine biosynthesis; L-histidine from 5-phospho-alpha-D-ribose 1-diphosphate: step 1/9. Catalyzes the condensation of ATP and 5-phosphoribose 1-diphosphate to form N'-(5'-phosphoribosyl)-ATP (PR-ATP). Has a crucial role in the pathway because the rate of histidine biosynthesis seems to be controlled primarily by regulation of the enzymatic activity. In Candida albicans (strain SC5314 / ATCC MYA-2876) (Yeast), this protein is ATP phosphoribosyltransferase (HIS1).